The following is a 1193-amino-acid chain: uncharacterized protein (1193 aa).

The N-terminal stretch at 1–25 (MKIKFINYLLLFFIIFLNYNGFVKS) is a signal peptide. Over 26-1172 (DCYQELDLVL…PQDPSDELST (1147 aa)) the chain is Extracellular. N-linked (GlcNAc...) asparagine glycosylation is found at asparagine 90, asparagine 183, asparagine 226, asparagine 265, asparagine 281, asparagine 345, asparagine 357, asparagine 436, asparagine 516, asparagine 552, asparagine 583, asparagine 627, asparagine 712, asparagine 765, asparagine 822, asparagine 938, asparagine 1038, and asparagine 1092. A helical transmembrane segment spans residues 1173–1193 (SSFVQVNLLFLSILIFTIFIF).

Its subcellular location is the membrane. This is an uncharacterized protein from Dictyostelium discoideum (Social amoeba).